The sequence spans 621 residues: uncharacterized protein (621 aa).

3 helical membrane-spanning segments follow: residues 240–260, 548–568, and 587–607; these read FFDA…NLLW, LGIV…VWTV, and VIIG…LTFM.

The protein resides in the cell membrane. This is an uncharacterized protein from Mycoplasma pneumoniae (strain ATCC 29342 / M129 / Subtype 1) (Mycoplasmoides pneumoniae).